The chain runs to 301 residues: Ribonuclease Z (301 aa).

Residues His-61, His-63, Asp-65, His-66, His-140, Asp-211, and His-269 each contribute to the Zn(2+) site. The active-site Proton acceptor is the Asp-65.

The protein belongs to the RNase Z family. In terms of assembly, homodimer. It depends on Zn(2+) as a cofactor.

It catalyses the reaction Endonucleolytic cleavage of RNA, removing extra 3' nucleotides from tRNA precursor, generating 3' termini of tRNAs. A 3'-hydroxy group is left at the tRNA terminus and a 5'-phosphoryl group is left at the trailer molecule.. Its function is as follows. Zinc phosphodiesterase, which displays some tRNA 3'-processing endonuclease activity. Probably involved in tRNA maturation, by removing a 3'-trailer from precursor tRNA. The protein is Ribonuclease Z of Bradyrhizobium diazoefficiens (strain JCM 10833 / BCRC 13528 / IAM 13628 / NBRC 14792 / USDA 110).